A 1553-amino-acid polypeptide reads, in one-letter code: ABC-type transporter cctS (1553 aa).

The next 4 helical transmembrane spans lie at leucine 27–alanine 47, leucine 90–glycine 110, aspartate 114–valine 134, and serine 151–glycine 171. An N-linked (GlcNAc...) asparagine glycan is attached at asparagine 176. The next 5 membrane-spanning stretches (helical) occupy residues phenylalanine 177 to threonine 197, leucine 286 to leucine 306, threonine 324 to cysteine 344, glycine 413 to leucine 433, and glycine 438 to isoleucine 458. In terms of domain architecture, ABC transmembrane type-1 1 spans alanine 293 to arginine 582. A glycan (N-linked (GlcNAc...) asparagine) is linked at asparagine 524. 2 helical membrane passes run threonine 527–tryptophan 547 and serine 550–phenylalanine 570. Asparagine 617 carries N-linked (GlcNAc...) asparagine glycosylation. One can recognise an ABC transporter 1 domain in the interval asparagine 635–asparagine 874. Position 670 to 677 (glycine 670 to serine 677) interacts with ATP. An N-linked (GlcNAc...) asparagine glycan is attached at asparagine 725. Residues tryptophan 948–tryptophan 970 form a helical membrane-spanning segment. Residues valine 951–glutamine 1255 form the ABC transmembrane type-1 2 domain. N-linked (GlcNAc...) asparagine glycosylation occurs at asparagine 992. A helical transmembrane segment spans residues isoleucine 1017–phenylalanine 1037. Asparagine 1085 is a glycosylation site (N-linked (GlcNAc...) asparagine). The next 4 helical transmembrane spans lie at isoleucine 1086–serine 1108, alanine 1113–glycine 1135, phenylalanine 1204–valine 1224, and alanine 1229–leucine 1249. Residues valine 1294–cysteine 1533 form the ABC transporter 2 domain. Glycine 1328–serine 1335 is a binding site for ATP.

It belongs to the ABC transporter superfamily.

It localises to the membrane. The protein operates within mycotoxin biosynthesis. In terms of biological role, ABC-type transporter; part of the gene cluster that mediates the biosynthesis of the mycotoxin cyclochlorotine, a hepatotoxic and carcinogenic cyclic chlorinated pentapeptide. CctS is essential for the biosynthesis of cyclochlorotine, maybe as a chloride channel that supplies chloride for chlorination by cctP2. The polypeptide is ABC-type transporter cctS (Talaromyces islandicus (Penicillium islandicum)).